A 310-amino-acid chain; its full sequence is p-hydroxybenzoic acid efflux pump subunit AaeA (310 aa).

Residues 12–32 traverse the membrane as a helical segment; the sequence is AITLVLVILAFIAIFRAWVYY.

Belongs to the membrane fusion protein (MFP) (TC 8.A.1) family.

It localises to the cell inner membrane. Functionally, forms an efflux pump with AaeB. The polypeptide is p-hydroxybenzoic acid efflux pump subunit AaeA (Salmonella heidelberg (strain SL476)).